The primary structure comprises 76 residues: Toxin Acra III-2 (76 aa).

One can recognise an LCN-type CS-alpha/beta domain in the interval 3–67; it reads VPGNYPLNTY…IWDAVKNHCT (65 aa). 3 disulfides stabilise this stretch: cysteine 18-cysteine 41, cysteine 27-cysteine 46, and cysteine 31-cysteine 48.

The protein belongs to the long (3 C-C) scorpion toxin superfamily. Sodium channel inhibitor family. Beta subfamily. In terms of tissue distribution, expressed by the venom gland.

The protein localises to the secreted. Functionally, binds to sodium channels (Nav) and affects the channel activation process. The polypeptide is Toxin Acra III-2 (Androctonus crassicauda (Arabian fat-tailed scorpion)).